Here is a 600-residue protein sequence, read N- to C-terminus: Lamin-B2 (600 aa).

A head region spans residues 2-27 (SGTPIRGTPGGTPLSPTRISRLQEKE). Serine 16 carries the phosphoserine; by CDK1 modification. Positions 25–381 (EKEELRQLND…KLLEGEEERL (357 aa)) constitute an IF rod domain. The interval 28-64 (ELRQLNDRLAVYIDRVRALELENDRLLVKISEKEEVT) is coil 1A. A coil 1B region spans residues 75-212 (YESELADARR…NVFEEEIRET (138 aa)). Positions 237-379 (QALEDLRNQH…YRKLLEGEEE (143 aa)) are coil 2. Disordered stretches follow at residues 377–449 (EEER…QMSQ) and 568–600 (ENEE…CLVM). A tail region spans residues 380–600 (RLKLSPSPSS…RTTSRGCLVM (221 aa)). The span at 383–410 (LSPSPSSRVTVSRATSSSSSSSTSLVRS) shows a compositional bias: low complexity. Residue serine 386 is modified to Phosphoserine. Positions 414 to 419 (KRRRIE) match the Nuclear localization signal motif. One can recognise an LTD domain in the interval 445–562 (FQMSQQASAT…EEVAVRTVTK (118 aa)). The segment covering 569–583 (NEEEEDEADFGEEDL) has biased composition (acidic residues). Polar residues predominate over residues 584–600 (FNQQGDPRTTSRGCLVM). Cysteine 597 carries the post-translational modification Cysteine methyl ester. Cysteine 597 carries the S-farnesyl cysteine lipid modification. The propeptide at 598 to 600 (LVM) is removed in mature form.

Belongs to the intermediate filament family. In terms of assembly, homodimer. Lamin dimers then assemble into dimeric head-to-tail polymers. Ultimately, two head-to-tail polymers assemble laterally into a protofilament with a uniformly shaped rod of 3.5 nm in diameter. Post-translationally, phosphorylation plays a key role in lamin organization, subcellular localization and nuclear envelope disintegration. Phosphorylation by CDK1 at Ser-16 at the onset of mitosis drives lamin disassembly and nuclear envelope breakdown.

It localises to the nucleus lamina. The protein resides in the nucleus envelope. It is found in the nucleus. The protein localises to the nucleoplasm. Its subcellular location is the nucleus matrix. Functionally, lamins are intermediate filament proteins that assemble into a filamentous meshwork, and which constitute the major components of the nuclear lamina, a fibrous layer on the nucleoplasmic side of the inner nuclear membrane. Lamins provide a framework for the nuclear envelope, bridging the nuclear envelope and chromatin. Plays an important role in nuclear assembly, chromatin organization, nuclear membrane and telomere dynamics. The chain is Lamin-B2 (LMNB2) from Gallus gallus (Chicken).